The chain runs to 191 residues: Thioredoxin F-type, chloroplastic (191 aa).

Residues 68-190 (KASLETAVGA…LVAAIEAARS (123 aa)) form the Thioredoxin domain. Residues Cys-115 and Cys-118 each act as nucleophile in the active site. A disulfide bond links Cys-115 and Cys-118.

It belongs to the thioredoxin family. Plant F-type subfamily. In terms of assembly, forms a complex with heterodimeric ferredoxin-thioredoxin reductase (FTR) and ferredoxin.

The protein resides in the plastid. The protein localises to the chloroplast. Participates in various redox reactions through the reversible oxidation of the active center dithiol to a disulfide. The F form is known to activate a number of enzymes of the photosynthetic carbon cycle. The chain is Thioredoxin F-type, chloroplastic from Mesembryanthemum crystallinum (Common ice plant).